The primary structure comprises 258 residues: Probable phthiotriol/phenolphthiotriol dimycocerosates methyltransferase 2 (258 aa).

The protein belongs to the methyltransferase superfamily. Phthiotriol/phenolphthiotriol dimycocerosates methyltransferase family.

In terms of biological role, catalyzes the methylation of the lipid moiety of the intermediate compounds phthiotriol and glycosylated phenolphthiotriol dimycoserosates to form phthiocerol dimycocerosates (DIM A) and glycosylated phenolphthiocerol dimycocerosates (PGL). The protein is Probable phthiotriol/phenolphthiotriol dimycocerosates methyltransferase 2 of Mycobacterium ulcerans (strain Agy99).